Reading from the N-terminus, the 455-residue chain is Nuclear distribution protein nudF (455 aa).

The region spanning 9-41 (QAEELHKSMIAYLVASDLPDTAAALRREVNLSE) is the LisH domain. Positions 61 to 88 (TSIARLQKKIMDLESRNATLQSELDNST) form a coiled coil. WD repeat units lie at residues 113–154 (SHRD…RTLK), 156–196 (HTRA…KNIR), 200–239 (GHDHIVSAVRFIPSRNLLVSASRDNDMRIWDVTTGYCVKT), 242–281 (GHTDWVRDVSISFDGRFLFSTGQDMTARLWDISTVSNIEH), 287–347 (GHEN…LMTL), 349–388 (GHDSWVQALVFHPGGKYLLSVSDDKTLRCWDLNQQGKCVK), 392–438 (AHES…IQMR), and 440–455 (VVATGGWDQKLKIFAG). The segment at 408-431 (KNVPGGDGAAEGEGNDKNGAGSEN) is disordered.

The protein belongs to the WD repeat LIS1/nudF family. Self-associates. Interacts with nudE and dynein.

It is found in the cytoplasm. Its subcellular location is the cytoskeleton. The protein localises to the spindle pole. In terms of biological role, positively regulates the activity of the minus-end directed microtubule motor protein dynein. May enhance dynein-mediated microtubule sliding by targeting dynein to the microtubule plus end. Required for nuclear migration during vegetative growth as well as development. Required for retrograde early endosome (EE) transport from the hyphal tip. Required for localization of dynein to the mitotic spindle poles. Recruits additional proteins to the dynein complex at SPBs. The sequence is that of Nuclear distribution protein nudF from Aspergillus flavus (strain ATCC 200026 / FGSC A1120 / IAM 13836 / NRRL 3357 / JCM 12722 / SRRC 167).